We begin with the raw amino-acid sequence, 159 residues long: Phosphoribosylaminoimidazole carboxylase (159 aa).

Substrate-binding residues include S11, D14, S38, K41, G67, and S69.

It catalyses the reaction 5-amino-1-(5-phospho-D-ribosyl)imidazole-4-carboxylate + H(+) = 5-amino-1-(5-phospho-beta-D-ribosyl)imidazole + CO2. The protein operates within purine metabolism; IMP biosynthesis via de novo pathway; 5-amino-1-(5-phospho-D-ribosyl)imidazole-4-carboxylate from 5-amino-1-(5-phospho-D-ribosyl)imidazole (carboxylase route): step 1/1. Catalyzes the reversible conversion of 5-aminoimidazole ribonucleotide (AIR) and CO(2) to 4-carboxy-5-aminoimidazole ribonucleotide (CAIR). Does not accept N5-carboxyaminoimidazole ribonucleotide (N5-CAIR) as a substrate. This chain is Phosphoribosylaminoimidazole carboxylase, found in Treponema denticola (strain ATCC 35405 / DSM 14222 / CIP 103919 / JCM 8153 / KCTC 15104).